The following is a 119-amino-acid chain: Ribonuclease P protein component (119 aa).

The protein belongs to the RnpA family. As to quaternary structure, consists of a catalytic RNA component (M1 or rnpB) and a protein subunit.

The catalysed reaction is Endonucleolytic cleavage of RNA, removing 5'-extranucleotides from tRNA precursor.. Its function is as follows. RNaseP catalyzes the removal of the 5'-leader sequence from pre-tRNA to produce the mature 5'-terminus. It can also cleave other RNA substrates such as 4.5S RNA. The protein component plays an auxiliary but essential role in vivo by binding to the 5'-leader sequence and broadening the substrate specificity of the ribozyme. The chain is Ribonuclease P protein component from Syntrophus aciditrophicus (strain SB).